A 374-amino-acid chain; its full sequence is GPN-loop GTPase 1 (374 aa).

A2 carries the post-translational modification N-acetylalanine. Position 29–34 (29–34 (GSGKTT)) interacts with GTP. The Gly-Pro-Asn (GPN)-loop; involved in dimer interface signature appears at 86–88 (GPN). 189–192 (NKTD) is a GTP binding site. A phosphoserine mark is found at S301, S312, and S314. The segment at 326 to 354 (RGTLDEEDEEADSDTDDIDHRVTEESHEE) is disordered. T328 bears the Phosphothreonine mark. Residues 330 to 342 (DEEDEEADSDTDD) are compositionally biased toward acidic residues. At S338 the chain carries Phosphoserine. A Phosphothreonine modification is found at T340. Basic and acidic residues predominate over residues 343–354 (IDHRVTEESHEE).

It belongs to the GPN-loop GTPase family. Heterodimer with GPN3. Binds to RNA polymerase II (RNAPII). Interacts directly with RNAPII subunits RPB4 and RPB7 and the CTD of RPB1. Interacts with XPA. Expressed ubiquitously.

It localises to the cytoplasm. The protein resides in the nucleus. Functionally, small GTPase required for proper nuclear import of RNA polymerase II (RNAPII). May act at an RNAP assembly step prior to nuclear import. Forms an interface between the RNA polymerase II enzyme and chaperone/scaffolding proteins, suggesting that it is required to connect RNA polymerase II to regulators of protein complex formation. May be involved in nuclear localization of XPA. The protein is GPN-loop GTPase 1 of Homo sapiens (Human).